A 325-amino-acid chain; its full sequence is RNA ligase 1 (325 aa).

It depends on Mg(2+) as a cofactor. Mn(2+) is required as a cofactor. AMPylates itself (auto-AMPylation).

The catalysed reaction is ATP + (ribonucleotide)n-3'-hydroxyl + 5'-phospho-(ribonucleotide)m = (ribonucleotide)n+m + AMP + diphosphate.. Its function is as follows. Functions as an RNA ligase, in vitro. The ligation reaction entails three nucleotidyl transfer steps. In the first step, the RNA ligase reacts with ATP in the absence of nucleic acid to form a covalent ligase-AMP intermediate and release pyrophosphate. In step 2, the ligase-AMP binds to the nucleic acid and transfers the adenylate to the 5'-PO4 terminus to form an adenylylated intermediate. In step 3, the RNA ligase directs the attack of the 3'-OH on the 5'-phosphoanhydride linkage, resulting in a repaired 3'-5' phosphodiester and release of AMP. Exhibits selectivity for single-stranded RNA substrates and may not have nick-sealing activity on double-stranded DNA-RNA hybrids. May play a role in maintaining RNA integrity under stress conditions, for example in response to reactive oxygen species (ROS). The protein is RNA ligase 1 of Pongo abelii (Sumatran orangutan).